We begin with the raw amino-acid sequence, 400 residues long: Sensor histidine kinase LnrJ (400 aa).

At 1–2 (MK) the chain is on the extracellular side. A helical transmembrane segment spans residues 3 to 23 (ALFFTRMFTLMVSCLMYLSIV). Residues 24 to 27 (KEDN) lie on the Cytoplasmic side of the membrane. The helical transmembrane segment at 28–48 (WFGYVFIAAGAAMYAANHVLL) threads the bilayer. The Extracellular portion of the chain corresponds to 49-61 (TKETNAIWFCLID). A helical membrane pass occupies residues 62 to 82 (IAIGFSFGFIFPGTGLFIIML). The Cytoplasmic segment spans residues 83-101 (CPVAVAFFLRGFPKRTAWS). The helical transmembrane segment at 102 to 122 (VLCLSSILFLTVLIRTYAMFG) threads the bilayer. Residues 123–125 (NEF) lie on the Extracellular side of the membrane. The chain crosses the membrane as a helical span at residues 126–146 (VIDHLTSMTFVVFCGVVGKLI). The Cytoplasmic segment spans residues 147-400 (RKLLDAQDTA…GPVQQKESLS (254 aa)). Residues 190 to 385 (IYERNRMARE…TVNAEFSLAN (196 aa)) enclose the Histidine kinase domain. Histidine 201 carries the phosphohistidine; by autocatalysis modification.

Post-translationally, autophosphorylated.

It localises to the cell membrane. The enzyme catalyses ATP + protein L-histidine = ADP + protein N-phospho-L-histidine.. Its function is as follows. Required for resistance to linearmycins, a family of antibiotic-specialized metabolites produced by some streptomycetes. Member of the two-component regulatory system LnrJ/LnrK, which induces expression of the LnrLMN ABC transporter in response to linearmycins and other polyenes. Acts as a specific sensor for linearmycin, either directly through binding or indirectly through membrane perturbation. Probably activates LnrK by phosphorylation. May also promote biofilm formation. In Bacillus subtilis (strain 168), this protein is Sensor histidine kinase LnrJ.